Reading from the N-terminus, the 643-residue chain is Fructose-1,6-bisphosphatase class 3 (643 aa).

This sequence belongs to the FBPase class 3 family. Requires Mn(2+) as cofactor.

The catalysed reaction is beta-D-fructose 1,6-bisphosphate + H2O = beta-D-fructose 6-phosphate + phosphate. Its pathway is carbohydrate biosynthesis; gluconeogenesis. The chain is Fructose-1,6-bisphosphatase class 3 from Streptococcus agalactiae serotype Ia (strain ATCC 27591 / A909 / CDC SS700).